A 248-amino-acid chain; its full sequence is Tropomyosin alpha-4 chain (248 aa).

An N-acetylalanine modification is found at Ala2. Residues Ala2–Ile248 are a coiled coil. Ser6 is modified (phosphoserine). A disordered region spans residues Ala16–Gly47. The span at Arg33–Gly47 shows a compositional bias: basic and acidic residues. N6-acetyllysine occurs at positions 177 and 215. Thr216 carries the phosphothreonine modification.

The protein belongs to the tropomyosin family. As to quaternary structure, homodimer. Heterodimer of an alpha (TPM1, TPM3 or TPM4) and a beta (TPM2) chain.

Its subcellular location is the cytoplasm. The protein localises to the cytoskeleton. In terms of biological role, binds to actin filaments in muscle and non-muscle cells. Plays a central role, in association with the troponin complex, in the calcium dependent regulation of vertebrate striated muscle contraction. Smooth muscle contraction is regulated by interaction with caldesmon. In non-muscle cells is implicated in stabilizing cytoskeleton actin filaments. Binds calcium. This is Tropomyosin alpha-4 chain (TPM4) from Equus caballus (Horse).